Consider the following 145-residue polypeptide: 3-dehydroquinate dehydratase 2 (145 aa).

Tyr22 functions as the Proton acceptor in the catalytic mechanism. Residues Asn73, His79, and Asp86 each coordinate substrate. His101 functions as the Proton donor in the catalytic mechanism. Substrate is bound by residues 102–103 (IS) and Arg112.

This sequence belongs to the type-II 3-dehydroquinase family. Homododecamer.

The enzyme catalyses 3-dehydroquinate = 3-dehydroshikimate + H2O. Its pathway is metabolic intermediate biosynthesis; chorismate biosynthesis; chorismate from D-erythrose 4-phosphate and phosphoenolpyruvate: step 3/7. In terms of biological role, catalyzes a trans-dehydration via an enolate intermediate. The sequence is that of 3-dehydroquinate dehydratase 2 (aroQ2) from Corynebacterium efficiens (strain DSM 44549 / YS-314 / AJ 12310 / JCM 11189 / NBRC 100395).